Reading from the N-terminus, the 450-residue chain is Mitochondrial distribution and morphology protein 10 (450 aa).

Belongs to the MDM10 family. As to quaternary structure, component of the ER-mitochondria encounter structure (ERMES) or MDM complex, composed of MMM1, MDM10, MDM12 and MDM34. Associates with the mitochondrial outer membrane sorting assembly machinery SAM(core) complex.

Its subcellular location is the mitochondrion outer membrane. Its function is as follows. Component of the ERMES/MDM complex, which serves as a molecular tether to connect the endoplasmic reticulum and mitochondria. Components of this complex are involved in the control of mitochondrial shape and protein biogenesis and may function in phospholipid exchange. MDM10 is involved in the late assembly steps of the general translocase of the mitochondrial outer membrane (TOM complex). Functions in the TOM40-specific route of the assembly of outer membrane beta-barrel proteins, including the association of TOM40 with the receptor TOM22 and small TOM proteins. Can associate with the SAM(core) complex as well as the MDM12-MMM1 complex, both involved in late steps of the major beta-barrel assembly pathway, that is responsible for biogenesis of all outer membrane beta-barrel proteins. May act as a switch that shuttles between both complexes and channels precursor proteins into the TOM40-specific pathway. Plays a role in mitochondrial morphology and in the inheritance of mitochondria. The chain is Mitochondrial distribution and morphology protein 10 from Paracoccidioides lutzii (strain ATCC MYA-826 / Pb01) (Paracoccidioides brasiliensis).